A 129-amino-acid chain; its full sequence is Glycine cleavage system H protein (129 aa).

The Lipoyl-binding domain occupies 24 to 106; it reads SYTVGISEHA…FGDGWFFRVM (83 aa). K65 bears the N6-lipoyllysine mark.

The protein belongs to the GcvH family. The glycine cleavage system is composed of four proteins: P, T, L and H. Requires (R)-lipoate as cofactor.

In terms of biological role, the glycine cleavage system catalyzes the degradation of glycine. The H protein shuttles the methylamine group of glycine from the P protein to the T protein. In Shewanella woodyi (strain ATCC 51908 / MS32), this protein is Glycine cleavage system H protein.